Reading from the N-terminus, the 254-residue chain is Uracil-DNA glycosylase (254 aa).

Aspartate 78 (proton acceptor) is an active-site residue.

The protein belongs to the uracil-DNA glycosylase (UDG) superfamily. UNG family.

The protein localises to the cytoplasm. It carries out the reaction Hydrolyzes single-stranded DNA or mismatched double-stranded DNA and polynucleotides, releasing free uracil.. Excises uracil residues from the DNA which can arise as a result of misincorporation of dUMP residues by DNA polymerase or due to deamination of cytosine. The polypeptide is Uracil-DNA glycosylase (Bordetella petrii (strain ATCC BAA-461 / DSM 12804 / CCUG 43448)).